An 88-amino-acid polypeptide reads, in one-letter code: UPF0250 protein Swoo_3713 (88 aa).

This sequence belongs to the UPF0250 family.

The sequence is that of UPF0250 protein Swoo_3713 from Shewanella woodyi (strain ATCC 51908 / MS32).